We begin with the raw amino-acid sequence, 154 residues long: Large ribosomal subunit protein uL13 (154 aa).

This sequence belongs to the universal ribosomal protein uL13 family. In terms of assembly, part of the 50S ribosomal subunit.

Its function is as follows. This protein is one of the early assembly proteins of the 50S ribosomal subunit, although it is not seen to bind rRNA by itself. It is important during the early stages of 50S assembly. The protein is Large ribosomal subunit protein uL13 of Sinorhizobium medicae (strain WSM419) (Ensifer medicae).